Reading from the N-terminus, the 460-residue chain is Putative type II methyltransferase M.OihORF3336P (460 aa).

Positions 15 to 458 constitute an SAM-dependent MTase C5-type domain; the sequence is PEVVDLFSGC…EAMKKNIQGG (444 aa). The active site involves cysteine 97.

This sequence belongs to the class I-like SAM-binding methyltransferase superfamily. C5-methyltransferase family.

The enzyme catalyses a 2'-deoxycytidine in DNA + S-adenosyl-L-methionine = a 5-methyl-2'-deoxycytidine in DNA + S-adenosyl-L-homocysteine + H(+). In terms of biological role, a methylase, recognizes the double-stranded sequence 5'-ACCGGT-3', methylates C-? on both strands. No endonuclease has been identified for this methylase. This Oceanobacillus iheyensis (strain DSM 14371 / CIP 107618 / JCM 11309 / KCTC 3954 / HTE831) protein is Putative type II methyltransferase M.OihORF3336P.